A 414-amino-acid polypeptide reads, in one-letter code: Tar DNA-binding protein homolog 1 (414 aa).

Composition is skewed to basic and acidic residues over residues 1–44 and 153–167; these read MADE…KTTD and DDGRDGRSGRKRAVE. Disordered stretches follow at residues 1-58 and 132-167; these read MADE…GDEP and SSADATSAKRRKVGSSDDSDSDDGRDGRSGRKRAVE. 2 RRM domains span residues 173 to 259 and 262 to 341; these read VDLI…QGRP and SRIF…IAQP. Positions 343 to 414 are disordered; that stretch reads EENNQSVGPD…APGDSRGPGW (72 aa). Residues 361–373 show a composition bias toward basic and acidic residues; sequence NRRERDRPDRRPI.

In terms of assembly, interacts with chromobox protein homolog hpl-2; interaction may maintain localization of hpl-2 to gene bodies. In terms of tissue distribution, widely expressed in a range of tissues including body wall muscles, pharynx and neurons of the midbody in adults and larvae.

It is found in the nucleus. The protein localises to the cytoplasm. In terms of biological role, RNA-binding protein which regulates transcription, splicing and RNA-editing. Limits the accumulation of double-stranded RNA by maintaining the abundance of the mature RNA transcripts that are formed from double-stranded precursor RNAs. Stress response protein that acts downstream of daf-16 in the insulin/IGF pathway to regulate longevity and the cellular stress response to osmotic, oxidative, proteotoxic and endoplasmic reticulum stress. Involved in the regulation of physiological processes including aging, fertility, growth and locomotion. Plays a role in maintaining localization of chromobox protein homolog hpl-2 to gene bodies, perhaps acting via binding to nascent RNA transcripts. The chain is Tar DNA-binding protein homolog 1 from Caenorhabditis elegans.